A 353-amino-acid chain; its full sequence is O-antigen biosynthesis glycosyltransferase WclY (353 aa).

A helical membrane pass occupies residues 116–136 (SLIWGLLWCSIWLFFDKLVIL). UDP is bound by residues N190 and E271. The E(x7)E glycosyltransferase motif motif lies at 263 to 271 (EGFGLTVLE).

This sequence belongs to the glycosyltransferase group 1 family. Glycosyltransferase 4 subfamily.

Its subcellular location is the membrane. Its pathway is bacterial outer membrane biogenesis; LPS O-antigen biosynthesis. Its function is as follows. Involved in the assembly of the O-repeating unit during O-antigen biosynthesis. N-acetylglucosamine transferase accountable for the alpha-D-GlcNAc-1,4-beta-D-Gal linkage within the O-antigen. The chain is O-antigen biosynthesis glycosyltransferase WclY from Escherichia coli.